The primary structure comprises 325 residues: MASATRKDLLKKVYNMVPPMLESFHKGQLGRVAVIGGSEDYTGAPYFSAMASAKLGCDMSHVICEPGAGAVIKTYSPNLMVHPYMRQSKNVGQNENIESIKSEVVAMLSRLHVVVIGPGLGRDKLMQDTCAEVIQEARKQGIPFVLDADGLYLAQTRPELVDGCTECILTPNVVEFGRLAKAKGVNVDEGDPSELCSKLAKAFGGVTIIQKGAKDYISNGSQTLISEGEGGLKRSGGQGDTLTGSLATLLAYRKAYHDKIWDHGTNMEPSETLALAAYGGSCITRECSKLAYKEKGRSLQAADLTEHVHTAFLNVIGEKEETPKL.

Positions L9–V315 constitute a YjeF C-terminal domain. (6S)-NADPHX contacts are provided by residues G119 and N172–R178. Residues K211 to D215 and G230 to G239 contribute to the ATP site. (6S)-NADPHX is bound at residue D240.

It belongs to the NnrD/CARKD family. Mg(2+) is required as a cofactor.

The protein resides in the cytoplasm. The catalysed reaction is (6S)-NADHX + ATP = ADP + phosphate + NADH + H(+). It catalyses the reaction (6S)-NADPHX + ATP = ADP + phosphate + NADPH + H(+). In terms of biological role, catalyzes the dehydration of the S-form of NAD(P)HX at the expense of ATP, which is converted to ADP. Together with NAD(P)HX epimerase, which catalyzes the epimerization of the S- and R-forms, the enzyme allows the repair of both epimers of NAD(P)HX, a damaged form of NAD(P)H that is a result of enzymatic or heat-dependent hydration. This is ATP-dependent (S)-NAD(P)H-hydrate dehydratase from Phaeosphaeria nodorum (strain SN15 / ATCC MYA-4574 / FGSC 10173) (Glume blotch fungus).